The sequence spans 1846 residues: Brefeldin A-inhibited guanine nucleotide-exchange protein 1 (1846 aa).

The interval 2 to 224 (YEGKKTKNMF…QEAKQMERER (223 aa)) is DCB; DCB:DCB domain and DCB:HUS domain interaction. Phosphoserine is present on Ser52. Disordered regions lie at residues 217-248 (AKQM…HLRY), 264-302 (DLDP…DQAT), and 347-410 (VSAS…SPGA). Basic and acidic residues predominate over residues 267-277 (PQTHDVDKSLQ). Phosphoserine is present on residues Ser286, Ser289, Ser290, Ser394, and Ser407. The span at 391–406 (SVSSNDTQESGNSSGP) shows a compositional bias: polar residues. The segment at 554–574 (ADAQSVVDIYVNYDCDLNAAN) is HUS; DCB:HUS domain interaction. A disordered region spans residues 631-684 (PNSQTTLGQEKPSEQEISEIKHPETINRYGSLNSLESTSSSGIGSYSTQMSGTD). Positions 641–655 (KPSEQEISEIKHPET) are enriched in basic and acidic residues. Residues 661 to 681 (SLNSLESTSSSGIGSYSTQMS) show a composition bias toward low complexity. Residues 688-877 (QFEVLKQQKE…SAIYNEIAGK (190 aa)) form the SEC7 domain. Residues 708–712 (KKPKR) carry the Nuclear localization signal (NLS) motif. A phosphoserine mark is found at Ser1076, Ser1563, and Ser1566. Positions 1571-1600 (DSAQPRSSDNRQQAPLVSVSPASEEVSKGR) are disordered. Over residues 1574 to 1585 (QPRSSDNRQQAP) the composition is skewed to polar residues.

In terms of assembly, homodimer. Interacts with ARFGEF2/BIG2; both proteins are probably part of the same or very similar macromolecular complexes. Interacts with FKBP2. Interacts with MYO9B. Interacts with PRKAR1A and PRKAR2A. Interacts with PPP1CC. Interacts with NCL, FBL, NUP62 and U3 small nucleolar RNA. Interacts with DPY30. Interacts with PDE3A. Interacts with KANK1. Interacts with TBC1D22A and TBC1D22B. Post-translationally, phosphorylated. In vitro phosphorylated by PKA reducing its GEF activity and dephosphorylated by phosphatase PP1.

It localises to the cytoplasm. The protein localises to the perinuclear region. It is found in the golgi apparatus. Its subcellular location is the trans-Golgi network. The protein resides in the nucleus. It localises to the nucleolus. The protein localises to the nucleus matrix. It is found in the membrane. Inhibited by brefeldin A. Its function is as follows. Promotes guanine-nucleotide exchange on ARF1 and ARF3. Promotes the activation of ARF1/ARF3 through replacement of GDP with GTP. Involved in vesicular trafficking. Required for the maintenance of Golgi structure; the function may be independent of its GEF activity. Required for the maturation of integrin beta-1 in the Golgi. Involved in the establishment and persistence of cell polarity during directed cell movement in wound healing. Proposed to act as A kinase-anchoring protein (AKAP) and may mediate crosstalk between Arf and PKA pathways. Inhibits GAP activity of MYO9B probably through competitive RhoA binding. The function in the nucleus remains to be determined. This is Brefeldin A-inhibited guanine nucleotide-exchange protein 1 (Arfgef1) from Rattus norvegicus (Rat).